The sequence spans 79 residues: Protein RALF-like 15 (79 aa).

The N-terminal stretch at 1-28 (MGMSKSIKVIVSLALILFLALAATKVEA) is a signal peptide. 2 disulfide bridges follow: Cys-46–Cys-54 and Cys-66–Cys-72.

This sequence belongs to the plant rapid alkalinization factor (RALF) family.

The protein localises to the secreted. In terms of biological role, cell signaling peptide that may regulate plant stress, growth, and development. Mediates a rapid alkalinization of extracellular space by mediating a transient increase in the cytoplasmic Ca(2+) concentration leading to a calcium-dependent signaling events through a cell surface receptor and a concomitant activation of some intracellular mitogen-activated protein kinases. In Arabidopsis thaliana (Mouse-ear cress), this protein is Protein RALF-like 15 (RALFL15).